A 179-amino-acid chain; its full sequence is Protein LDB18 (179 aa).

In terms of biological role, may be involved in protein-linked oligosaccharide phosphorylation since the deletion reduces the negative charge of the cell surface. In Saccharomyces cerevisiae (strain ATCC 204508 / S288c) (Baker's yeast), this protein is Protein LDB18 (LDB18).